Here is a 314-residue protein sequence, read N- to C-terminus: tRNA pseudouridine synthase B (314 aa).

H43 contacts substrate. The Nucleophile role is filled by D48. Residues Y76, Y179, and L200 each coordinate substrate.

The protein belongs to the pseudouridine synthase TruB family. Type 1 subfamily.

The enzyme catalyses uridine(55) in tRNA = pseudouridine(55) in tRNA. Functionally, responsible for synthesis of pseudouridine from uracil-55 in the psi GC loop of transfer RNAs. This is tRNA pseudouridine synthase B from Pectobacterium atrosepticum (strain SCRI 1043 / ATCC BAA-672) (Erwinia carotovora subsp. atroseptica).